Consider the following 364-residue polypeptide: Nuclear hormone receptor family member nhr-53 (364 aa).

Positions 20–95 form a DNA-binding region, nuclear receptor; that stretch reads PSYCLICCEV…VGMQRSSVQQ (76 aa). NR C4-type zinc fingers lie at residues 23-43 and 59-83; these read CLICCEVADGHHFGAAACRAC and CPKNGQCFILSNVRNMCRACRYEKC. One can recognise an NR LBD domain in the interval 110-363; sequence REEPVLDTMR…KNLYDMFSPT (254 aa).

The protein belongs to the nuclear hormone receptor family.

It is found in the nucleus. In terms of biological role, orphan nuclear receptor. The polypeptide is Nuclear hormone receptor family member nhr-53 (nhr-53) (Caenorhabditis elegans).